The following is a 423-amino-acid chain: Glutamate-1-semialdehyde 2,1-aminomutase (423 aa).

Lys259 is subject to N6-(pyridoxal phosphate)lysine.

Belongs to the class-III pyridoxal-phosphate-dependent aminotransferase family. HemL subfamily. In terms of assembly, homodimer. It depends on pyridoxal 5'-phosphate as a cofactor.

Its subcellular location is the cytoplasm. The enzyme catalyses (S)-4-amino-5-oxopentanoate = 5-aminolevulinate. Its pathway is porphyrin-containing compound metabolism; protoporphyrin-IX biosynthesis; 5-aminolevulinate from L-glutamyl-tRNA(Glu): step 2/2. In Thermosipho melanesiensis (strain DSM 12029 / CIP 104789 / BI429), this protein is Glutamate-1-semialdehyde 2,1-aminomutase.